A 257-amino-acid chain; its full sequence is GTP cyclohydrolase 1 type 2 homolog (257 aa).

The a divalent metal cation site is built by histidine 65, aspartate 103, histidine 221, and glutamate 224.

It belongs to the GTP cyclohydrolase I type 2/NIF3 family. As to quaternary structure, homohexamer.

The polypeptide is GTP cyclohydrolase 1 type 2 homolog (ykiD) (Lactococcus lactis subsp. lactis (strain IL1403) (Streptococcus lactis)).